Reading from the N-terminus, the 176-residue chain is Cytochrome b (176 aa).

3 consecutive transmembrane segments (helical) span residues 33–53 (FGSL…FLAM), 77–98 (WMLR…YLHV), and 113–133 (WNVG…GYVL). The heme b site is built by His-83 and His-97.

This sequence belongs to the cytochrome b family. The cytochrome bc1 complex contains 11 subunits: 3 respiratory subunits (MT-CYB, CYC1 and UQCRFS1), 2 core proteins (UQCRC1 and UQCRC2) and 6 low-molecular weight proteins (UQCRH/QCR6, UQCRB/QCR7, UQCRQ/QCR8, UQCR10/QCR9, UQCR11/QCR10 and a cleavage product of UQCRFS1). This cytochrome bc1 complex then forms a dimer. Requires heme b as cofactor.

It is found in the mitochondrion inner membrane. Functionally, component of the ubiquinol-cytochrome c reductase complex (complex III or cytochrome b-c1 complex) that is part of the mitochondrial respiratory chain. The b-c1 complex mediates electron transfer from ubiquinol to cytochrome c. Contributes to the generation of a proton gradient across the mitochondrial membrane that is then used for ATP synthesis. The polypeptide is Cytochrome b (MT-CYB) (Idionycteris phyllotis (Allen's big-eared bat)).